A 91-amino-acid polypeptide reads, in one-letter code: Small ribosomal subunit protein bS20 (91 aa).

The disordered stretch occupies residues 1–28; sequence MANTASAEKRNRQAQKRRARNVQVRTGV.

This sequence belongs to the bacterial ribosomal protein bS20 family.

Functionally, binds directly to 16S ribosomal RNA. This is Small ribosomal subunit protein bS20 from Anaeromyxobacter dehalogenans (strain 2CP-1 / ATCC BAA-258).